A 393-amino-acid chain; its full sequence is Probable acetyl-CoA acyltransferase (393 aa).

Catalysis depends on Cys-88, which acts as the Acyl-thioester intermediate. Catalysis depends on proton acceptor residues His-349 and Cys-378.

Belongs to the thiolase-like superfamily. Thiolase family.

It localises to the cytoplasm. It carries out the reaction 2 acetyl-CoA = acetoacetyl-CoA + CoA. This is Probable acetyl-CoA acyltransferase from Staphylococcus aureus (strain Mu50 / ATCC 700699).